Reading from the N-terminus, the 1150-residue chain is Fl(2)d-associated complex component (1150 aa).

A compositionally biased stretch (basic and acidic residues) spans Met1–Arg10. 4 disordered regions span residues Met1 to Arg444, Gln477 to Leu710, Ala833 to Asn914, and Lys1034 to Pro1053. The span at Arg11 to Ala20 shows a compositional bias: basic residues. A compositionally biased stretch (low complexity) spans Thr21–Ser44. The span at Gly47–Ser69 shows a compositional bias: gly residues. Residues Gly72–Arg97 show a composition bias toward basic residues. The span at Arg98 to Pro107 shows a compositional bias: low complexity. Composition is skewed to basic residues over residues Ser110–Ala144 and Ala162–Ala175. Positions Lys122–Ala147 form a coiled coil. Positions Ala176–Arg199 are enriched in basic and acidic residues. Residues Ser202–Thr215 are compositionally biased toward low complexity. Residues Pro269 to Gly347 are a coiled coil. 3 stretches are compositionally biased toward basic and acidic residues: residues Ser270–Arg414, Tyr428–Arg444, and Pro492–Glu529. The segment covering Ala537–Pro558 has biased composition (gly residues). 2 stretches are compositionally biased toward basic and acidic residues: residues Glu589 to Asp611 and Trp630 to Arg640. A compositionally biased stretch (pro residues) spans Pro660–Ala669. Residues Gly693–Gly702 show a composition bias toward basic and acidic residues. Low complexity predominate over residues Gln851–Ser861. Residues Glu879–Asp889 show a composition bias toward acidic residues. Residues Ile890 to Leu903 are compositionally biased toward basic and acidic residues. Positions Thr905 to Asn914 are enriched in acidic residues.

It belongs to the ZC3H13 family. As to quaternary structure, component of the WMM complex, a N6-methyltransferase complex composed of a catalytic subcomplex, named MAC, and of an associated subcomplex, named MACOM. The MAC subcomplex is composed of Ime4/Mettl3 and Mettl14. The MACOM subcomplex is composed of fl(2)d, Flacc/Xio, Hakai, vir, and, in some cases of nito. Widely expressed during embryogenesis but shows enrichment in the neuroectoderm.

It is found in the nucleus. Its function is as follows. Associated component of the WMM complex, a complex that mediates N6-methyladenosine (m6A) methylation of mRNAs, a modification that plays a role in the efficiency of mRNA splicing and is required for sex determination. In the WMM complex, acts as a key regulator of m6A methylation by bridging fl(2)d to the RNA-binding component nito. Required for sex determination and dosage compensation via Sxl alternative splicing: m6A methylation acts as a key regulator of Sxl pre-mRNA and promotes female-specific alternative splicing of Sxl, which determines female physiognomy. The chain is Fl(2)d-associated complex component from Drosophila melanogaster (Fruit fly).